Here is a 95-residue protein sequence, read N- to C-terminus: MQITDVRIRKITSEGKMKAIVSVTFDNEFVVHDIKVIEGQNGLFIAMPSRKTPDGEFKDIAHPINTATREKIQSAILAEYEKVKNEEETKTETEE.

Belongs to the SpoVG family.

Could be involved in septation. This is Putative septation protein SpoVG from Clostridium acetobutylicum (strain ATCC 824 / DSM 792 / JCM 1419 / IAM 19013 / LMG 5710 / NBRC 13948 / NRRL B-527 / VKM B-1787 / 2291 / W).